The primary structure comprises 358 residues: Nuclear receptor subfamily 1 group I member 3 (358 aa).

Positions 18–93 form a DNA-binding region, nuclear receptor; sequence PRNCVVCGDR…VGMRKDMILS (76 aa). The segment at 21–41 adopts an NR C4-type zinc-finger fold; sequence CVVCGDRATGYHFHALTCEGC. A Phosphothreonine; by PKC modification is found at Thr-48. An NR C4-type zinc finger spans residues 57-81; the sequence is CPFAGRCEVSKAQRRHCPACRLQKC. Positions 119-358 constitute an NR LBD domain; the sequence is QQKELVQILL…MTPLLGEICS (240 aa).

It belongs to the nuclear hormone receptor family. NR1 subfamily. As to quaternary structure, heterodimer of NR1I3 and RXR. Interacts with PSMC4. Interacts with ECT2. Directly interacts with DNAJC7; this complex may also include HSP90. Interacts with CRY1. Interacts with CRY2 in a ligand-dependent manner. Phosphorylated at Thr-48 by PKC, dephosphorylation of Thr-48 is required for nuclear translocation and activation. Predominantly expressed in liver.

Its subcellular location is the nucleus. The protein resides in the cytoplasm. It is found in the cytoskeleton. In terms of biological role, binds and transactivates the retinoic acid response elements that control expression of the retinoic acid receptor beta 2 and alcohol dehydrogenase 3 genes. Transactivates both the phenobarbital responsive element module of the human CYP2B6 gene and the CYP3A4 xenobiotic response element. The protein is Nuclear receptor subfamily 1 group I member 3 (Nr1i3) of Mus musculus (Mouse).